Here is a 379-residue protein sequence, read N- to C-terminus: Glutamate 5-kinase (379 aa).

Lysine 15 provides a ligand contact to ATP. Substrate-binding residues include serine 56, aspartate 143, and asparagine 155. 175 to 176 serves as a coordination point for ATP; the sequence is SD. Residues 281 to 358 enclose the PUA domain; the sequence is KGTLTIDAGA…CDAAQILGIS (78 aa).

It belongs to the glutamate 5-kinase family.

It is found in the cytoplasm. It carries out the reaction L-glutamate + ATP = L-glutamyl 5-phosphate + ADP. Its pathway is amino-acid biosynthesis; L-proline biosynthesis; L-glutamate 5-semialdehyde from L-glutamate: step 1/2. Its function is as follows. Catalyzes the transfer of a phosphate group to glutamate to form L-glutamate 5-phosphate. The polypeptide is Glutamate 5-kinase (Nitrobacter hamburgensis (strain DSM 10229 / NCIMB 13809 / X14)).